The sequence spans 367 residues: Beta sliding clamp (367 aa).

This sequence belongs to the beta sliding clamp family. In terms of assembly, forms a ring-shaped head-to-tail homodimer around DNA which binds and tethers DNA polymerases and other proteins to the DNA. The DNA replisome complex has a single clamp-loading complex (3 tau and 1 each of delta, delta', psi and chi subunits) which binds 3 Pol III cores (1 core on the leading strand and 2 on the lagging strand) each with a beta sliding clamp dimer. Additional proteins in the replisome are other copies of gamma, psi and chi, Ssb, DNA helicase and RNA primase.

It localises to the cytoplasm. In terms of biological role, confers DNA tethering and processivity to DNA polymerases and other proteins. Acts as a clamp, forming a ring around DNA (a reaction catalyzed by the clamp-loading complex) which diffuses in an ATP-independent manner freely and bidirectionally along dsDNA. Initially characterized for its ability to contact the catalytic subunit of DNA polymerase III (Pol III), a complex, multichain enzyme responsible for most of the replicative synthesis in bacteria; Pol III exhibits 3'-5' exonuclease proofreading activity. The beta chain is required for initiation of replication as well as for processivity of DNA replication. This chain is Beta sliding clamp (dnaN), found in Pseudomonas putida (strain ATCC 47054 / DSM 6125 / CFBP 8728 / NCIMB 11950 / KT2440).